The primary structure comprises 258 residues: Short-chain dehydrogenase reductase 3c (258 aa).

NAD(+) is bound at residue 12-36 (IITGGASGIGADAARLFTDHGAKVV). Residue Ser-144 coordinates substrate. Tyr-156 serves as the catalytic Proton acceptor.

It belongs to the short-chain dehydrogenases/reductases (SDR) family.

This is Short-chain dehydrogenase reductase 3c (SDR3c) from Arabidopsis thaliana (Mouse-ear cress).